We begin with the raw amino-acid sequence, 846 residues long: Leucine--tRNA ligase (846 aa).

The 'HIGH' region motif lies at 42–52; that stretch reads PYPSGNLHMGH. The 'KMSKS' region motif lies at 586-590; the sequence is KMSKS. Residue K589 participates in ATP binding.

Belongs to the class-I aminoacyl-tRNA synthetase family.

It localises to the cytoplasm. The enzyme catalyses tRNA(Leu) + L-leucine + ATP = L-leucyl-tRNA(Leu) + AMP + diphosphate. The polypeptide is Leucine--tRNA ligase (Heliobacterium modesticaldum (strain ATCC 51547 / Ice1)).